The chain runs to 497 residues: Cysteine-rich secretory protein LCCL domain-containing 2 (497 aa).

A signal peptide spans Met-1–Gly-22. An N-linked (GlcNAc...) asparagine glycan is attached at Asn-27. In terms of domain architecture, SCP spans Leu-62 to Tyr-200. LCCL domains are found at residues Met-284–Phe-379 and Lys-385–Lys-488. 4 disulfides stabilise this stretch: Cys-290–Cys-308, Cys-312–Cys-332, Cys-391–Cys-413, and Cys-417–Cys-440.

Belongs to the CRISP family. Binds to heparin, dermatan sulfate and chondroitin sulfate.

Its subcellular location is the secreted. Promotes matrix assembly. This Homo sapiens (Human) protein is Cysteine-rich secretory protein LCCL domain-containing 2 (CRISPLD2).